The following is a 132-amino-acid chain: Nitrogenase iron-iron protein delta chain (132 aa).

Hexamer of two alpha, two beta, and two delta chains. Requires iron-sulfur cluster as cofactor.

The enzyme catalyses N2 + 8 reduced [2Fe-2S]-[ferredoxin] + 16 ATP + 16 H2O = H2 + 8 oxidized [2Fe-2S]-[ferredoxin] + 2 NH4(+) + 16 ADP + 16 phosphate + 6 H(+). The key enzymatic reactions in nitrogen fixation are catalyzed by the nitrogenase complex, which has 2 components: the iron protein (component 2) and a component 1 which is either a molybdenum-iron protein, a vanadium-iron, or an iron-iron protein. This is Nitrogenase iron-iron protein delta chain (anfG) from Ruminiclostridium hungatei (Clostridium hungatei).